Consider the following 650-residue polypeptide: Epithelial sodium channel subunit gamma (650 aa).

The Cytoplasmic portion of the chain corresponds to 1-55; it reads MAPGEKIKAKIKKNLPVRGPQAPTIKDLMHWYCMNTNTHGCRRIVVSRGRLRRLL. A helical membrane pass occupies residues 56-76; that stretch reads WIAFTLTAVALIIWQCALLVF. At 77 to 542 the chain is on the extracellular side; the sequence is SFYTVSVSIK…GGQLGLWMSC (466 aa). 8 disulfide bridges follow: C100-C284, C208-C215, C261-C268, C373-C458, C395-C454, C399-C450, C408-C435, and C410-C424. Residues 135-222 are gating release of inhibition by proteolysis (GRIP); protease-sensitive region that is responsible for the proteolytic activation of the channel; that stretch reads RKRREAGSMP…SDCATYTFSS (88 aa). N-linked (GlcNAc...) asparagine glycosylation occurs at N210. N-linked (GlcNAc...) asparagine glycosylation is present at N272. N-linked (GlcNAc...) asparagine glycosylation is present at N498. Residues 543 to 563 form a helical membrane-spanning segment; that stretch reads SVVCVIEIIEVFFIDFFSIIA. At 564-650 the chain is on the cytoplasmic side; sequence RRQWHKAKDW…LTDTQLTNEL (87 aa). The interval 577–628 is disordered; it reads RQTPPSTETPSSRQGQDNPALDTDDDLPTFTSAMRLPPAPGSTVPGTPPPRY. The span at 579-593 shows a compositional bias: polar residues; the sequence is TPPSTETPSSRQGQD. Residues 624–628 carry the PY motif; mediates interaction, ubiquitination and inhibition by NEDD4 and NEDD4L motif; that stretch reads PPPRY. Positions 624–628 match the PY motif; recruits WW domain-containing proteins and is thereby required for ubiquitination and inhibition of the channel by NEDD4 and NEDD4L motif; sequence PPPRY.

The protein belongs to the amiloride-sensitive sodium channel (TC 1.A.6) family. SCNN1G subfamily. As to quaternary structure, component of the heterotrimeric epithelial sodium channel (ENaC) composed of an alpha/SCNN1A, a beta/SCNN1B and a gamma/SCNN1G subunit. Interacts with WWP1 (via WW domains). Interacts with WWP2 (via WW domains); inhibits the channel. Interacts with the full-length immature form of PCSK9 (pro-PCSK9); inhibits ENaC by promoting its proteasomal degradation. Interacts with BPIFA1; the interaction is indirect via SCNN1B and inhibits the proteolytic maturation of SCNN1A and SCNN1G and the activation of ENaC. Phosphorylated on serine and threonine residues. Aldosterone and insulin increase the basal level of phosphorylation. Post-translationally, ubiquitinated. Can be ubiquitinated at multiple sites and undergo monoubiquitination and polyubiquitination. Ubiquitination by NEDD4 or NEDD4L inhibits the ENaC channel through endocytosis, intracellular retention and degradation of its individual subunits. In terms of processing, ENaC is activated through the proteolytic maturation of its subunits. Furin cleaves the SCNN1G subunit first, followed by cleavage by prostasin (PRSS8), which results in a stepwise increase in the open probability of the channel due to the release of an inhibitory tract. BPIFA1, which is recruited by the SCNN1B subunit, prevents the proteolytic activation of ENaC. N-glycosylated. N-linked glycans are processed to complex type during ENaC complex assembly and transport to the plasma membrane.

The protein localises to the apical cell membrane. It carries out the reaction Na(+)(in) = Na(+)(out). Originally identified and characterized by its inhibition by the diuretic drug amiloride. Its function is as follows. This is one of the three pore-forming subunits of the heterotrimeric epithelial sodium channel (ENaC), a critical regulator of sodium balance and fluid homeostasis. ENaC operates in epithelial tissues, where it mediates the electrodiffusion of sodium ions from extracellular fluid through the apical membrane of cells, with water following osmotically. It plays a key role in maintaining sodium homeostasis through electrogenic sodium reabsorption in the kidneys. Additionally, ENaC is essential for airway surface liquid homeostasis, which is crucial for proper mucus clearance. This chain is Epithelial sodium channel subunit gamma, found in Rattus norvegicus (Rat).